The chain runs to 107 residues: Flagellar transcriptional regulator FlhD (107 aa).

It belongs to the FlhD family. In terms of assembly, homodimer; disulfide-linked. Forms a heterohexamer composed of two FlhC and four FlhD subunits. Each FlhC binds a FlhD dimer, forming a heterotrimer, and a hexamer assembles by dimerization of two heterotrimers.

It is found in the cytoplasm. Its function is as follows. Functions in complex with FlhC as a master transcriptional regulator that regulates transcription of several flagellar and non-flagellar operons by binding to their promoter region. Activates expression of class 2 flagellar genes, including fliA, which is a flagellum-specific sigma factor that turns on the class 3 genes. Also regulates genes whose products function in a variety of physiological pathways. This Bordetella bronchiseptica (strain ATCC BAA-588 / NCTC 13252 / RB50) (Alcaligenes bronchisepticus) protein is Flagellar transcriptional regulator FlhD.